A 499-amino-acid polypeptide reads, in one-letter code: Probable cytosol aminopeptidase (499 aa).

Residues Lys-263 and Asp-268 each coordinate Mn(2+). The active site involves Lys-275. Mn(2+) is bound by residues Asp-286, Asp-345, and Glu-347. Arg-349 is a catalytic residue.

It belongs to the peptidase M17 family. Mn(2+) serves as cofactor.

Its subcellular location is the cytoplasm. The enzyme catalyses Release of an N-terminal amino acid, Xaa-|-Yaa-, in which Xaa is preferably Leu, but may be other amino acids including Pro although not Arg or Lys, and Yaa may be Pro. Amino acid amides and methyl esters are also readily hydrolyzed, but rates on arylamides are exceedingly low.. It catalyses the reaction Release of an N-terminal amino acid, preferentially leucine, but not glutamic or aspartic acids.. Functionally, presumably involved in the processing and regular turnover of intracellular proteins. Catalyzes the removal of unsubstituted N-terminal amino acids from various peptides. The sequence is that of Probable cytosol aminopeptidase from Chlamydia trachomatis serovar A (strain ATCC VR-571B / DSM 19440 / HAR-13).